The chain runs to 203 residues: Small ribosomal subunit protein uS4 (203 aa).

The region spanning 93 to 156 (RRLDNVVYRL…AKVPAILEAV (64 aa)) is the S4 RNA-binding domain.

It belongs to the universal ribosomal protein uS4 family. Part of the 30S ribosomal subunit. Contacts protein S5. The interaction surface between S4 and S5 is involved in control of translational fidelity.

One of the primary rRNA binding proteins, it binds directly to 16S rRNA where it nucleates assembly of the body of the 30S subunit. Its function is as follows. With S5 and S12 plays an important role in translational accuracy. This is Small ribosomal subunit protein uS4 from Streptococcus mutans serotype c (strain ATCC 700610 / UA159).